An 88-amino-acid chain; its full sequence is Apolipoprotein C-I (88 aa).

A signal peptide spans 1–26; that stretch reads MRLFLSLPVLVVVLAMVLEGPAPTQA.

This sequence belongs to the apolipoprotein C1 family.

The protein localises to the secreted. Its function is as follows. Inhibitor of lipoprotein binding to the low density lipoprotein (LDL) receptor, LDL receptor-related protein, and very low density lipoprotein (VLDL) receptor. Associates with high density lipoproteins (HDL) and the triacylglycerol-rich lipoproteins in the plasma and makes up about 10% of the protein of the VLDL and 2% of that of HDL. Appears to interfere directly with fatty acid uptake and is also the major plasma inhibitor of cholesteryl ester transfer protein (CETP). Binds free fatty acids and reduces their intracellular esterification. Modulates the interaction of APOE with beta-migrating VLDL and inhibits binding of beta-VLDL to the LDL receptor-related protein. The sequence is that of Apolipoprotein C-I (APOC1) from Phoca vitulina (Harbor seal).